A 240-amino-acid chain; its full sequence is Sugar fermentation stimulation protein homolog (240 aa).

It belongs to the SfsA family.

In Natranaerobius thermophilus (strain ATCC BAA-1301 / DSM 18059 / JW/NM-WN-LF), this protein is Sugar fermentation stimulation protein homolog.